The sequence spans 432 residues: Adenylosuccinate synthetase (432 aa).

Residues Gly13–Lys19 and Gly41–Thr43 each bind GTP. Asp14 serves as the catalytic Proton acceptor. Mg(2+)-binding residues include Asp14 and Gly41. Residues Asp14–Lys17, Asn39–His42, Thr130, Arg144, Gln225, Thr240, and Arg304 each bind IMP. His42 acts as the Proton donor in catalysis. A substrate-binding site is contributed by Ala300 to Arg306. GTP is bound by residues Arg306, Lys332–Asp334, and Ser415–Gly417.

This sequence belongs to the adenylosuccinate synthetase family. In terms of assembly, homodimer. The cofactor is Mg(2+).

The protein resides in the cytoplasm. The enzyme catalyses IMP + L-aspartate + GTP = N(6)-(1,2-dicarboxyethyl)-AMP + GDP + phosphate + 2 H(+). It participates in purine metabolism; AMP biosynthesis via de novo pathway; AMP from IMP: step 1/2. In terms of biological role, plays an important role in the de novo pathway of purine nucleotide biosynthesis. Catalyzes the first committed step in the biosynthesis of AMP from IMP. The sequence is that of Adenylosuccinate synthetase from Haemophilus ducreyi (strain 35000HP / ATCC 700724).